A 313-amino-acid chain; its full sequence is Glutathione S-transferase omega-like 2 (313 aa).

Catalysis depends on Cys49, which acts as the Nucleophile. In terms of domain architecture, GST C-terminal spans Pro161–Tyr289.

It belongs to the GST superfamily. Omega family.

Its subcellular location is the cytoplasm. It is found in the nucleus. It localises to the golgi apparatus. It carries out the reaction RX + glutathione = an S-substituted glutathione + a halide anion + H(+). The enzyme catalyses L-dehydroascorbate + 2 glutathione = glutathione disulfide + L-ascorbate. In terms of biological role, active as '1-Cys' thiol transferase against beta-hydroxyethyl disulfide (HED), as dehydroascorbate reductase and as dimethylarsinic acid reductase, while not active against the standard GST substrate 1-chloro-2,4-dinitrobenzene (CDNB). May be involved in cell wall organization and biogenesis. The sequence is that of Glutathione S-transferase omega-like 2 (gto2) from Schizosaccharomyces pombe (strain 972 / ATCC 24843) (Fission yeast).